Consider the following 499-residue polypeptide: ADP,ATP carrier protein 5 (499 aa).

11 helical membrane-spanning segments follow: residues 25-45 (LGKFIPMSTLMFCILFNQNVL), 61-81 (IAGFAKVYCVTPAAALFVIIY), 93-113 (IFYYLSAFFISFFVLFTFVIY), 148-168 (YIVYYSLAELWPNIFYVLLFW), 183-203 (FYTLFSLFGNSSLILVGFLMM), 223-243 (ITLVQVSTTIVAIVAIICCLL), 286-306 (LWLLLICSAAFGFAINLVEAV), 327-347 (LYILWTGVAIMVMTIIGNNIM), 356-376 (AVISPVIIMVTGILFFVLIVF), 380-400 (ILSLFDGAILMSPLALAVSIG), and 468-488 (LISPILMVVFTFVCLAWIYAV).

This sequence belongs to the ADP/ATP translocase tlc family.

It is found in the cell membrane. Provides the rickettsial cell with host ATP in exchange for rickettsial ADP. This is an obligate exchange system. This energy acquiring activity is an important component of rickettsial parasitism. This chain is ADP,ATP carrier protein 5 (tlcE), found in Rickettsia conorii (strain ATCC VR-613 / Malish 7).